A 611-amino-acid polypeptide reads, in one-letter code: Elongation factor 4 (611 aa).

Positions 11–193 (EKIRNFSIIA…QVVEYVPAPS (183 aa)) constitute a tr-type G domain. GTP contacts are provided by residues 23 to 28 (DHGKST) and 140 to 143 (NKID).

The protein belongs to the TRAFAC class translation factor GTPase superfamily. Classic translation factor GTPase family. LepA subfamily.

The protein resides in the cell membrane. It carries out the reaction GTP + H2O = GDP + phosphate + H(+). In terms of biological role, required for accurate and efficient protein synthesis under certain stress conditions. May act as a fidelity factor of the translation reaction, by catalyzing a one-codon backward translocation of tRNAs on improperly translocated ribosomes. Back-translocation proceeds from a post-translocation (POST) complex to a pre-translocation (PRE) complex, thus giving elongation factor G a second chance to translocate the tRNAs correctly. Binds to ribosomes in a GTP-dependent manner. The polypeptide is Elongation factor 4 (Enterococcus faecalis (strain ATCC 700802 / V583)).